The sequence spans 389 residues: Acyl-[acyl-carrier-protein] dehydrogenase MbtN (389 aa).

Belongs to the acyl-CoA dehydrogenase family. FAD serves as cofactor.

Its pathway is siderophore biosynthesis; mycobactin biosynthesis. In terms of biological role, catalyzes the dehydrogenation at the alpha-beta position of ACP-bound acyl chains. This results in the introduction of a double bond in the lipidic chain, which is further transferred to the epsilon-amino group of lysine residue in the mycobactin core by MbtK. The protein is Acyl-[acyl-carrier-protein] dehydrogenase MbtN (mbtN) of Mycobacterium sp. (strain MCS).